A 979-amino-acid chain; its full sequence is MSVCTLSVPVSSLSPGRRCNTFSDSGILGCVPINSNTDEEDVVEEKMVAEGVNKEAKQPAKKKRKKGLRIKGKRRRKKLILAKKFSKDLGSGRPVADAPALLASNDPEQDEESLFESNIEKQIYLPSTRAKTSIVWHFFHVDPQYTWRAICNLCEKSVSRGKPGSHLGTSTLQRHLQARHSPHWTRANKFGVASGEEDFTLDVSLSPSSGSNGSFEYIPTDPLDDNRMGKKHDKSASDALRAERGRFLIKSNIVKHALIPGTRAKTSAVWNFFYTDPQHISRAVCNICKRSVSRGRPGSHLGTSTLQRHLQATHPIHWAVANKDSGAVANGLDEAETERSDLLSDTLHGEKSTGSQDLTAEDLSDSDSDEPMLEVENRSESPIPVAEQGTLMRAQERETTCCGNPVSSHISQAIIQMIVEDMHPYNYFSTPAFQRFMQIVAPDYRLPSETYFFTKAVPQLYDCVREKIFLTLENVQSQKIHLTVDIWTHDPSTDYFIVTVHWVSLETASFLNNGRIPDFRKWAVLCVTGLAKDCLITNILQELNDQIGLWLSPNFLIPSFIVSDNSSNVVHAIKDGGFTHVPCFLHCLNMVIQDFFCEHKSIENMLVAARKTCHHFSHSVKARQILQEFQNDHQLPWKNLKQDETGHWISTFYMLKWLLEHCYSVHHSLGRASGVVLTSLQWTLMTYVCDILKPFEEATQKVSVKTAGLNQVLPLIHHLLLSLQKLREDFQVRGITQALNLVDSLSLKLETDTLLSAMLKSKPCILATLLDPCFKNSLEDFFPQGADLETYKQFLAEEVCNYMESSPEICQIPTSEASCPSVTVGADSFTSSLKEGTSSSGSVDSSAVDNVALGSKSFMFPSAVAVVDEYFKEKYSEFSGGDDPLIYWQRKISIWPALTQVAIQYLSCPMCSWQSECIFTKNSHFHPKQIMSLDFDNIEQLMFLKMNLKNVNYDYSTLVLSWDPEQNEVVQSSEKEILP.

The tract at residues 1 to 89 (MSVCTLSVPV…ILAKKFSKDL (89 aa)) is required for nucleolar localization. The BED-type 1 zinc-finger motif lies at 130–187 (AKTSIVWHFFHVDPQYTWRAICNLCEKSVSRGKPGSHLGTSTLQRHLQARHSPHWTRA). Zn(2+) is bound by residues cysteine 151, cysteine 154, histidine 175, and histidine 180. A disordered region spans residues 207-232 (PSSGSNGSFEYIPTDPLDDNRMGKKH). The BED-type 2 zinc-finger motif lies at 264–321 (AKTSAVWNFFYTDPQHISRAVCNICKRSVSRGRPGSHLGTSTLQRHLQATHPIHWAVA). Zn(2+) is bound by residues cysteine 285, cysteine 288, histidine 309, and histidine 314. Positions 333–383 (DEAETERSDLLSDTLHGEKSTGSQDLTAEDLSDSDSDEPMLEVENRSESPI) are disordered. Over residues 337–351 (TERSDLLSDTLHGEK) the composition is skewed to basic and acidic residues. Positions 359-373 (TAEDLSDSDSDEPML) are enriched in acidic residues. Serine 381 carries the post-translational modification Phosphoserine. Positions 866 to 948 (VVDEYFKEKY…EQLMFLKMNL (83 aa)) are HATC (Hobo-Ac-Tam3) domain.

In terms of tissue distribution, expressed in pancreatic islet cells (at protein level).

The protein resides in the nucleus. The protein localises to the nucleolus. It localises to the cytoplasm. Transcriptional repressor which binds to the consensus sequence 5'-GCTCGC-3', transcription regulation may be tissue-specific. Regulates the expression of target genes such as: IGF2, PGAP6/TMEM8, ENHO, and PIANP. Acts as a transcriptional repressor of growth factor IGF2, thereby negatively regulating postnatal growth of muscles and internal organs, especially in females. Negatively regulates myoblast differentiation and myoblast mitochondrial activity via its regulation of IGF2 transcription. Negatively regulates the cell cycle of myoblasts, potentially via transcriptional regulation of the E2F family of transcription factors such as: E2F1 and E2F2. Positively regulates the cell cycle and survival of pancreatic beta cells. Binds to the CDH2 gene and may directly repress CDH2 transcription. Probably by controlling CDH2 expression, regulates pancreatic beta cell adhesion, and formation of cell-to-cell junctions between pancreatic beta cells and neural crest stem cells. May also play a role in embryonic beta cell differentiation. May play a role in insulin sensitivity and glucose clearance. The sequence is that of Zinc finger BED domain-containing protein 6 from Homo sapiens (Human).